Here is a 181-residue protein sequence, read N- to C-terminus: Ribonuclease M5 (181 aa).

In terms of domain architecture, Toprim spans 5-88 (KEIIVVEGKD…IKHAYLNTKD (84 aa)). Mg(2+) is bound by residues Glu-11, Asp-57, and Asp-59.

It belongs to the ribonuclease M5 family. Mg(2+) serves as cofactor.

It is found in the cytoplasm. The enzyme catalyses Endonucleolytic cleavage of RNA, removing 21 and 42 nucleotides, respectively, from the 5'- and 3'-termini of a 5S-rRNA precursor.. Required for correct processing of both the 5' and 3' ends of 5S rRNA precursor. Cleaves both sides of a double-stranded region yielding mature 5S rRNA in one step. This chain is Ribonuclease M5, found in Borreliella burgdorferi (strain ATCC 35210 / DSM 4680 / CIP 102532 / B31) (Borrelia burgdorferi).